We begin with the raw amino-acid sequence, 92 residues long: Small ribosomal subunit protein uS19 (92 aa).

This sequence belongs to the universal ribosomal protein uS19 family.

Its function is as follows. Protein S19 forms a complex with S13 that binds strongly to the 16S ribosomal RNA. This chain is Small ribosomal subunit protein uS19, found in Psychromonas ingrahamii (strain DSM 17664 / CCUG 51855 / 37).